Here is a 130-residue protein sequence, read N- to C-terminus: Small ribosomal subunit protein uS9 (130 aa).

This sequence belongs to the universal ribosomal protein uS9 family.

The sequence is that of Small ribosomal subunit protein uS9 from Oceanobacillus iheyensis (strain DSM 14371 / CIP 107618 / JCM 11309 / KCTC 3954 / HTE831).